Reading from the N-terminus, the 1002-residue chain is Calcium-transporting ATPase sarcoplasmic/endoplasmic reticulum type (1002 aa).

Residues 1–48 are Cytoplasmic-facing; sequence MEDGHSKTVEQSLNFFGTDGERGLTLDQIKTNQAKYGPNELPTEEGKS. A helical membrane pass occupies residues 49-69; sequence IWQLVLEQFDDLLVKILLLAA. Topologically, residues 70–89 are lumenal; the sequence is IISFVLALFEEHEETFTAFV. The helical transmembrane segment at 90-110 threads the bilayer; the sequence is EPLVILLILIANAVVGVWQER. Residues 111–253 are Cytoplasmic-facing; sequence NAESAIEALK…EIKTPLQQKL (143 aa). Residues 254–273 form a helical membrane-spanning segment; it reads DEFGEQLSKVISVICVAVWA. Over 274–295 the chain is Lumenal; that stretch reads INIGHFNDPAHGGSWIKGAIYY. A helical membrane pass occupies residues 296 to 313; sequence FKIAVALAVAAIPEGLPA. Residues Val-304, Ala-305, Ile-307, and Glu-309 each contribute to the Ca(2+) site. Topologically, residues 314–757 are cytoplasmic; that stretch reads VITTCLALGT…EEGRAIYNNM (444 aa). Asp-351 functions as the 4-aspartylphosphate intermediate in the catalytic mechanism. Mg(2+) is bound by residues Asp-703 and Asp-707. The helical transmembrane segment at 758–777 threads the bilayer; it reads KQFIRYLISSNIGEVVSIFL. Positions 768 and 771 each coordinate Ca(2+). The Lumenal portion of the chain corresponds to 778 to 787; that stretch reads TAALGLPEAL. The helical transmembrane segment at 788–808 threads the bilayer; sequence IPVQLLWVNLVTDGLPATALG. Residues Asn-796, Thr-799, and Asp-800 each coordinate Ca(2+). Over 809–828 the chain is Cytoplasmic; it reads FNPPDLDIMDKPPRKADEGL. A helical membrane pass occupies residues 829–851; that stretch reads ISGWLFFRYMAIGFYVGAATVGA. At 852 to 897 the chain is on the lumenal side; the sequence is AAWWFIASSEGPGLTYWQLTHHLSCLGGGDEFKGVDCKIFSDPKAM. Residues 898-917 form a helical membrane-spanning segment; that stretch reads TMALSVLVTIEMLNAMNSLS. Residue Glu-908 coordinates Ca(2+). Residues 918–930 lie on the Cytoplasmic side of the membrane; sequence ENQSLISMPPWCN. The chain crosses the membrane as a helical span at residues 931–949; it reads LWLIGSMALSFTLHFVILY. Residues 950 to 964 are Lumenal-facing; sequence VDVLSTVFQVTPLSA. A helical membrane pass occupies residues 965–985; the sequence is EEWITVMKFSIPVVLLDETLK. Residues 986–1002 are Cytoplasmic-facing; it reads FVARKIADVPDAVVDKW.

Belongs to the cation transport ATPase (P-type) (TC 3.A.3) family.

Its subcellular location is the endoplasmic reticulum membrane. The protein localises to the sarcoplasmic reticulum membrane. The catalysed reaction is Ca(2+)(in) + ATP + H2O = Ca(2+)(out) + ADP + phosphate + H(+). Its function is as follows. This magnesium-dependent enzyme catalyzes the hydrolysis of ATP coupled with the transport of calcium. The chain is Calcium-transporting ATPase sarcoplasmic/endoplasmic reticulum type from Drosophila pseudoobscura pseudoobscura (Fruit fly).